A 60-amino-acid chain; its full sequence is MAVQQNKKSRSKRDMRRSHDALTGPTLSVDAVSGEKHLRHHVTADGFYRGRKVINKGSDE.

The segment at 1-28 (MAVQQNKKSRSKRDMRRSHDALTGPTLS) is disordered. Residues 7–16 (KKSRSKRDMR) are compositionally biased toward basic residues.

This sequence belongs to the bacterial ribosomal protein bL32 family.

This Cellvibrio japonicus (strain Ueda107) (Pseudomonas fluorescens subsp. cellulosa) protein is Large ribosomal subunit protein bL32.